The chain runs to 361 residues: Elongator complex protein 4 (361 aa).

2 disordered regions span residues 93–124 (QLPGDSDRPNKNENSAGEDNHSSPPSKNPQQE) and 338–361 (DDEQKDTKISNTNPQKQPVKSLDF). Composition is skewed to polar residues over residues 104–121 (NENSAGEDNHSSPPSKNP) and 346–355 (ISNTNPQKQP).

It belongs to the ELP4 family. As to quaternary structure, component of the elongator complex.

It is found in the cytoplasm. The protein localises to the nucleus. It participates in tRNA modification; 5-methoxycarbonylmethyl-2-thiouridine-tRNA biosynthesis. Functionally, component of the elongator complex, a multiprotein complex which is required for multiple tRNA modifications, including mcm5U (5-methoxycarbonylmethyl uridine), mcm5s2U (5-methoxycarbonylmethyl-2-thiouridine), and ncm5U (5-carbamoylmethyl uridine). The elongator complex catalyzes formation of carboxymethyluridine in the wobble base at position 34 in tRNAs. The sequence is that of Elongator complex protein 4 from Schizosaccharomyces pombe (strain 972 / ATCC 24843) (Fission yeast).